Reading from the N-terminus, the 705-residue chain is Frizzled-4 (705 aa).

Residues 1-22 (MKPTCILCLLVVILLHPRISKS) form the signal peptide. The span at 21-37 (KSSTSGNPSASSSSSSP) shows a compositional bias: low complexity. The disordered stretch occupies residues 21–40 (KSSTSGNPSASSSSSSPPEI). The Extracellular segment spans residues 23–233 (STSGNPSASS…FTPAEKHLAE (211 aa)). An FZ domain is found at 41 to 163 (PAFRQCETIR…NNHETMCMEG (123 aa)). Intrachain disulfides connect Cys-46/Cys-107, Cys-54/Cys-100, Cys-91/Cys-130, Cys-119/Cys-160, and Cys-123/Cys-147. N-linked (GlcNAc...) asparagine glycosylation is present at Asn-60. A helical transmembrane segment spans residues 234–254 (IWVSTWAYAALGLALVATVCL). Over 255–270 (LASDGSRLASAKWSRL) the chain is Cytoplasmic. Residues 271–291 (LSPLIWCHNMVTLGWAVRFMV) form a helical membrane-spanning segment. At 292–322 (GRTGTACGTDPQAPNESLLTVDGLSNASCAS) the chain is on the extracellular side. Asn-306 and Asn-317 each carry an N-linked (GlcNAc...) asparagine glycan. Residues 323 to 343 (VFLMRYYFGMAACAWWAVLCL) traverse the membrane as a helical segment. Residues 344–386 (GWHRDIRRHSPDSKGHVVIPSNFGGSPAKRNSAKTAQQDLTQN) are Cytoplasmic-facing. Residues 387 to 407 (NFVCFVAWGLPAFQTSAVIVA) form a helical membrane-spanning segment. The Extracellular segment spans residues 408–430 (RFVDADELLGACFVGNQSDKALQ). N-linked (GlcNAc...) asparagine glycosylation occurs at Asn-423. The chain crosses the membrane as a helical span at residues 431 to 451 (ILVATPVFCYWIFGSMNLISG). The Cytoplasmic portion of the chain corresponds to 452-483 (YLVHCRTKEILRNSNALSVQQQLQQLSAHSSS). Residues 484–504 (GIGIFLFIYGLACAMLLLAVI) form a helical membrane-spanning segment. Residues 505-529 (YEFANIDVWLGSGDTNTPLWPFLLR) are Extracellular-facing. Residues 530–550 (AFMELMLGICCFAWVLGPSIS) traverse the membrane as a helical segment. Residues 551 to 705 (TLYKRQVSNG…LQQYGNETLL (155 aa)) lie on the Cytoplasmic side of the membrane. The tract at residues 635–681 (RSVHHQQRHSPHHHHHQQQQHHQFHPHHNHQHHSTSSHRLYYPPGSY) is disordered. Residues 636–670 (SVHHQQRHSPHHHHHQQQQHHQFHPHHNHQHHSTS) show a composition bias toward basic residues. A PDZ-binding motif is present at residues 703–705 (TLL).

The protein belongs to the G-protein coupled receptor Fz/Smo family.

Its subcellular location is the membrane. Functionally, receptor for Wnt proteins. Most of frizzled receptors are coupled to the beta-catenin canonical signaling pathway, which leads to the activation of disheveled proteins, inhibition of GSK-3 kinase, nuclear accumulation of beta-catenin and activation of Wnt target genes. A second signaling pathway involving PKC and calcium fluxes has been seen for some family members, but it is not yet clear if it represents a distinct pathway or if it can be integrated in the canonical pathway, as PKC seems to be required for Wnt-mediated inactivation of GSK-3 kinase. Both pathways seem to involve interactions with G-proteins. May be involved in transduction and intercellular transmission of polarity information during tissue morphogenesis and/or in differentiated tissues. Required to coordinate the cytoskeletons of epidermal cells to produce a parallel array of cuticular hairs and bristles. The sequence is that of Frizzled-4 (fz4) from Drosophila melanogaster (Fruit fly).